A 156-amino-acid chain; its full sequence is Ribonuclease pancreatic (156 aa).

The N-terminal stretch at 1-28 (MALEKSLVLLPLFVLMLLVLGWVQPSLG) is a signal peptide. Positions 35 and 38 each coordinate substrate. His40 acts as the Proton acceptor in catalysis. Asn50 and Asn62 each carry an N-linked (GlcNAc...) asparagine glycan. Cystine bridges form between Cys54–Cys112, Cys68–Cys123, Cys86–Cys138, and Cys93–Cys100. Substrate-binding positions include 69-73 (KPVNT) and Lys94. Asn104 carries an N-linked (GlcNAc...) asparagine glycan. Arg113 is a binding site for substrate. Asn116 carries N-linked (GlcNAc...) asparagine glycosylation. His147 acts as the Proton donor in catalysis.

Belongs to the pancreatic ribonuclease family. In terms of assembly, monomer. Interacts with and forms tight 1:1 complexes with RNH1. Dimerization of two such complexes may occur. Interaction with RNH1 inhibits this protein.

The protein resides in the secreted. It carries out the reaction an [RNA] containing cytidine + H2O = an [RNA]-3'-cytidine-3'-phosphate + a 5'-hydroxy-ribonucleotide-3'-[RNA].. The enzyme catalyses an [RNA] containing uridine + H2O = an [RNA]-3'-uridine-3'-phosphate + a 5'-hydroxy-ribonucleotide-3'-[RNA].. Functionally, endonuclease that catalyzes the cleavage of RNA on the 3' side of pyrimidine nucleotides. Acts on single-stranded and double-stranded RNA. In Nomascus leucogenys (Northern white-cheeked gibbon), this protein is Ribonuclease pancreatic (RNASE1).